Here is a 205-residue protein sequence, read N- to C-terminus: Glycerol-3-phosphate acyltransferase 1 (205 aa).

The next 5 membrane-spanning stretches (helical) occupy residues 7–27 (TLIG…KLFL), 52–74 (WGIL…VYFV), 78–100 (HINI…WNHF), 125–145 (LLIA…PLVF), and 160–180 (AGIV…QDII).

Belongs to the PlsY family. In terms of assembly, probably interacts with PlsX.

Its subcellular location is the cell membrane. The enzyme catalyses an acyl phosphate + sn-glycerol 3-phosphate = a 1-acyl-sn-glycero-3-phosphate + phosphate. The protein operates within lipid metabolism; phospholipid metabolism. Catalyzes the transfer of an acyl group from acyl-phosphate (acyl-PO(4)) to glycerol-3-phosphate (G3P) to form lysophosphatidic acid (LPA). This enzyme utilizes acyl-phosphate as fatty acyl donor, but not acyl-CoA or acyl-ACP. The protein is Glycerol-3-phosphate acyltransferase 1 of Lactobacillus acidophilus (strain ATCC 700396 / NCK56 / N2 / NCFM).